Reading from the N-terminus, the 407-residue chain is Large ribosomal subunit protein uL4y (407 aa).

The disordered stretch occupies residues 57 to 96 (PYAVSKKAGHQTSAESWGTGRAVSRIPRVPGGGTHRAGQA).

This sequence belongs to the universal ribosomal protein uL4 family.

The sequence is that of Large ribosomal subunit protein uL4y (RPL4D) from Arabidopsis thaliana (Mouse-ear cress).